The sequence spans 206 residues: Imidazoleglycerol-phosphate dehydratase (206 aa).

Positions 1-24 (MDPTASGRQAPRNPRQATVQRETK) are disordered.

It belongs to the imidazoleglycerol-phosphate dehydratase family.

It localises to the cytoplasm. The catalysed reaction is D-erythro-1-(imidazol-4-yl)glycerol 3-phosphate = 3-(imidazol-4-yl)-2-oxopropyl phosphate + H2O. It participates in amino-acid biosynthesis; L-histidine biosynthesis; L-histidine from 5-phospho-alpha-D-ribose 1-diphosphate: step 6/9. The sequence is that of Imidazoleglycerol-phosphate dehydratase from Acidothermus cellulolyticus (strain ATCC 43068 / DSM 8971 / 11B).